We begin with the raw amino-acid sequence, 305 residues long: LPYIALILVCWSVLSQAAQTDVEERADKRRPIWIMGHMVNAIAQIDEFVNLGANSIETDVSFDDNANPEYTYHGIPCDCGRSCLKWENFNDFLKGLRSATTPGNAKYQAKLILVVFDLKTGSLYDNQANEAGKKLAKNLLKHYWNNGNNGGRAYIVLSIPDLNHYPLIKGFKDQLTQDGHPELMDKVGHDFSGNDAIGDVGNAYKKAGISGHVWQSDGITNCLLRGLDRVKQAIANRDSAKGFINKVYYWTVDKRATTRDALDAGVDGVMTNYPDVITDVLNESAYKNKFRVASYEDNPWETFKK.

Residues 1–17 (LPYIALILVCWSVLSQA) form the signal peptide. The propeptide occupies 18–25 (AQTDVEER). H37 is a catalytic residue. Mg(2+) is bound by residues E57 and D59. H73 functions as the Nucleophile in the catalytic mechanism. 2 cysteine pairs are disulfide-bonded: C77–C83 and C79–C222. D117 is a binding site for Mg(2+). A glycan (N-linked (GlcNAc...) asparagine) is linked at N282.

This sequence belongs to the arthropod phospholipase D family. Class II subfamily. Mg(2+) serves as cofactor. In terms of tissue distribution, expressed by the venom gland.

It localises to the secreted. The enzyme catalyses an N-(acyl)-sphingosylphosphocholine = an N-(acyl)-sphingosyl-1,3-cyclic phosphate + choline. The catalysed reaction is an N-(acyl)-sphingosylphosphoethanolamine = an N-(acyl)-sphingosyl-1,3-cyclic phosphate + ethanolamine. It carries out the reaction a 1-acyl-sn-glycero-3-phosphocholine = a 1-acyl-sn-glycero-2,3-cyclic phosphate + choline. It catalyses the reaction a 1-acyl-sn-glycero-3-phosphoethanolamine = a 1-acyl-sn-glycero-2,3-cyclic phosphate + ethanolamine. Functionally, dermonecrotic toxins cleave the phosphodiester linkage between the phosphate and headgroup of certain phospholipids (sphingolipid and lysolipid substrates), forming an alcohol (often choline) and a cyclic phosphate. This toxin acts on sphingomyelin (SM). It may also act on ceramide phosphoethanolamine (CPE), lysophosphatidylcholine (LPC) and lysophosphatidylethanolamine (LPE), but not on lysophosphatidylserine (LPS), and lysophosphatidylglycerol (LPG). It acts by transphosphatidylation, releasing exclusively cyclic phosphate products as second products. Induces dermonecrosis, hemolysis, increased vascular permeability, edema, inflammatory response, and platelet aggregation. The polypeptide is Dermonecrotic toxin LiSicTox-alphaIA2aiii (Loxosceles intermedia (Brown spider)).